The following is a 103-amino-acid chain: Co-chaperonin GroES (103 aa).

It belongs to the GroES chaperonin family. In terms of assembly, heptamer of 7 subunits arranged in a ring. Interacts with the chaperonin GroEL.

The protein resides in the cytoplasm. Functionally, together with the chaperonin GroEL, plays an essential role in assisting protein folding. The GroEL-GroES system forms a nano-cage that allows encapsulation of the non-native substrate proteins and provides a physical environment optimized to promote and accelerate protein folding. GroES binds to the apical surface of the GroEL ring, thereby capping the opening of the GroEL channel. This Synechococcus sp. (strain CC9902) protein is Co-chaperonin GroES.